Reading from the N-terminus, the 96-residue chain is Muconolactone Delta-isomerase (96 aa).

The protein belongs to the muconolactone Delta-isomerase family. In terms of assembly, homodecamer.

It catalyses the reaction (S)-muconolactone = (4,5-dihydro-5-oxofuran-2-yl)-acetate. It participates in aromatic compound metabolism; beta-ketoadipate pathway; 5-oxo-4,5-dihydro-2-furylacetate from catechol: step 3/3. In Pseudomonas aeruginosa (strain ATCC 15692 / DSM 22644 / CIP 104116 / JCM 14847 / LMG 12228 / 1C / PRS 101 / PAO1), this protein is Muconolactone Delta-isomerase (catC).